A 330-amino-acid chain; its full sequence is D-cysteine desulfhydrase (330 aa).

Residue Lys-52 is modified to N6-(pyridoxal phosphate)lysine.

This sequence belongs to the ACC deaminase/D-cysteine desulfhydrase family. Homodimer. Requires pyridoxal 5'-phosphate as cofactor.

It catalyses the reaction D-cysteine + H2O = hydrogen sulfide + pyruvate + NH4(+) + H(+). Its function is as follows. Catalyzes the alpha,beta-elimination reaction of D-cysteine and of several D-cysteine derivatives. It could be a defense mechanism against D-cysteine. This is D-cysteine desulfhydrase from Serratia proteamaculans (strain 568).